The chain runs to 230 residues: Sugar fermentation stimulation protein homolog (230 aa).

It belongs to the SfsA family.

In Ruegeria pomeroyi (strain ATCC 700808 / DSM 15171 / DSS-3) (Silicibacter pomeroyi), this protein is Sugar fermentation stimulation protein homolog.